Reading from the N-terminus, the 85-residue chain is Small ribosomal subunit protein bS18 (85 aa).

The protein belongs to the bacterial ribosomal protein bS18 family. As to quaternary structure, part of the 30S ribosomal subunit. Forms a tight heterodimer with protein bS6.

In terms of biological role, binds as a heterodimer with protein bS6 to the central domain of the 16S rRNA, where it helps stabilize the platform of the 30S subunit. The sequence is that of Small ribosomal subunit protein bS18 from Solidesulfovibrio magneticus (strain ATCC 700980 / DSM 13731 / RS-1) (Desulfovibrio magneticus).